The sequence spans 703 residues: Centrosomal protein of 63 kDa (703 aa).

M1 is subject to N-acetylmethionine. Coiled-coil stretches lie at residues 22–199 (EAEL…ESVE), 242–306 (MTVL…QHAV), 353–533 (LEGS…STQM), and 676–703 (HILE…TALK). S278 bears the Phosphoserine mark.

The protein belongs to the CEP63 family. Interacts with CEP152 and CDK1; these interactions recruit both ligands to centrosomes. Interacts with CDK2, CDK5RAP2, WDR62, CEP90, KIAA0753/moonraker and CCDC14. CEP63, CDK5RAP2, CEP152, WDR62 are proposed to form a stepwise assembled complex at the centrosome forming a ring near parental centrioles. Interacts with CCDC57; the interaction is required for their location to proximal end of centrioles. Interacts with FXR1; promoting its stabilization. In terms of assembly, (Microbial infection) Interacts with zika virus serine protease NS3; this interaction disorganizes the centrosome. In terms of processing, polyubiquitinated via 'Lys-48'-linked ubiquitin, leading to its degradation. Deubiquitinated by USP36, promoting its stabilization.

It localises to the cytoplasm. Its subcellular location is the cytoskeleton. It is found in the microtubule organizing center. The protein resides in the centrosome. The protein localises to the centriole. It localises to the centriolar satellite. Its function is as follows. Required for normal spindle assembly. Plays a key role in mother-centriole-dependent centriole duplication; the function seems also to involve CEP152, CDK5RAP2 and WDR62 through a stepwise assembled complex at the centrosome that recruits CDK2 required for centriole duplication. Reported to be required for centrosomal recruitment of CEP152; however, this function has been questioned. Also recruits CDK1 to centrosomes. Plays a role in DNA damage response. Following DNA damage, such as double-strand breaks (DSBs), is removed from centrosomes; this leads to the inactivation of spindle assembly and delay in mitotic progression. Promotes stabilization of FXR1 protein by inhibiting FXR1 ubiquitination. This is Centrosomal protein of 63 kDa from Homo sapiens (Human).